We begin with the raw amino-acid sequence, 380 residues long: MSGPLRKHHPLLKVVNHSVIDLPVPSNISVMWNFGSLLGLCLVSQILTGLFLAMHYTADVNLAFSSVAHICRDVNYGWLLRNLHANGASFMFICLYMHIGRGLYYGSYFYRETWNIGVMLLVLTMATAFLGYVLPWGQMSFWGATVITNLFSAIPYLGPDLVQWLWGGFSVDNATLTRFFAFHFFLPFMIAGLSVVHLLFLHQTGANNPTGLAGDVDKVPFHAYFSYKDVVGFVVLLAGLVFIALFSPNLLTDPENYIPANPLVTPVHIQPEWYFLFAYAILRSIPNKLGGVVALAMSIVVLFFMPFVHSSRQTSHNFRPLAQVLFWLMVVNVLLLTWLGGQPVEYPYIFLGQAASVIYFVNILLLIPIVGYVENKLLFS.

4 helical membrane passes run 34–54, 78–99, 114–134, and 179–199; these read FGSL…FLAM, WLLR…YMHI, WNIG…GYVL, and FFAF…VHLL. Residues His-84 and His-98 each contribute to the heme b site. His-183 and His-197 together coordinate heme b. An a ubiquinone-binding site is contributed by His-202. 4 helical membrane passes run 227–247, 289–309, 321–341, and 348–368; these read YKDV…ALFS, LGGV…PFVH, LAQV…WLGG, and YIFL…LLIP.

The protein belongs to the cytochrome b family. The cytochrome bc1 complex contains 3 respiratory subunits (MT-CYB, CYC1 and UQCRFS1), 2 core proteins (UQCRC1 and UQCRC2) and probably 6 low-molecular weight proteins. Requires heme b as cofactor.

It is found in the mitochondrion inner membrane. Component of the ubiquinol-cytochrome c reductase complex (complex III or cytochrome b-c1 complex) that is part of the mitochondrial respiratory chain. The b-c1 complex mediates electron transfer from ubiquinol to cytochrome c. Contributes to the generation of a proton gradient across the mitochondrial membrane that is then used for ATP synthesis. The polypeptide is Cytochrome b (MT-CYB) (Branchiostoma floridae (Florida lancelet)).